A 288-amino-acid chain; its full sequence is Large ribosomal subunit protein uL2 (288 aa).

The segment covering 29 to 43 (PEKSLTRGFKRDKGR) has biased composition (basic and acidic residues). Disordered stretches follow at residues 29-59 (PEKSLTRGFKRDKGRNNRGVITSRRRGGGHK) and 210-288 (GRNR…GRQS). Composition is skewed to basic residues over residues 210–221 (GRNRWKGRRPKV) and 272–288 (VRRRKKSSKRGRGGRQS).

Belongs to the universal ribosomal protein uL2 family. As to quaternary structure, part of the 50S ribosomal subunit. Forms a bridge to the 30S subunit in the 70S ribosome.

In terms of biological role, one of the primary rRNA binding proteins. Required for association of the 30S and 50S subunits to form the 70S ribosome, for tRNA binding and peptide bond formation. It has been suggested to have peptidyltransferase activity; this is somewhat controversial. Makes several contacts with the 16S rRNA in the 70S ribosome. This Thermosynechococcus vestitus (strain NIES-2133 / IAM M-273 / BP-1) protein is Large ribosomal subunit protein uL2.